The primary structure comprises 471 residues: ATP synthase subunit beta, chloroplastic (471 aa).

151 to 158 is a binding site for ATP; it reads GGAGVGKT.

The protein belongs to the ATPase alpha/beta chains family. As to quaternary structure, F-type ATPases have 2 components, CF(1) - the catalytic core - and CF(0) - the membrane proton channel. CF(1) has five subunits: alpha(3), beta(3), gamma(1), delta(1), epsilon(1). CF(0) has four main subunits: a(1), b(1), b'(1) and c(9-12).

It localises to the plastid. Its subcellular location is the chloroplast thylakoid membrane. The enzyme catalyses ATP + H2O + 4 H(+)(in) = ADP + phosphate + 5 H(+)(out). Functionally, produces ATP from ADP in the presence of a proton gradient across the membrane. The catalytic sites are hosted primarily by the beta subunits. The chain is ATP synthase subunit beta, chloroplastic from Rhodomonas salina (Cryptomonas salina).